Reading from the N-terminus, the 92-residue chain is Small ribosomal subunit protein uS19 (92 aa).

The protein belongs to the universal ribosomal protein uS19 family.

Its function is as follows. Protein S19 forms a complex with S13 that binds strongly to the 16S ribosomal RNA. In Bacillus thuringiensis subsp. konkukian (strain 97-27), this protein is Small ribosomal subunit protein uS19.